A 549-amino-acid chain; its full sequence is MARQKMFYNKLLGMLSVGFGFAWALENITIYEFDFGKGILDQSYGGVFSNNGPSQVQLRDAVLMNGTVVYDSNGAWDSSALEEWLQGQKKVSIEKIFENIGPSAVYPSISPGVVIASPSQTHPDYFYQWIRDSALTINSIVSHSAGPAIETLLQYLNVSFHLQRSNNTLGAGIGYTNDTVALGDPKWNVDNTAFTEDWGRPQNDGPALRSIAILKIIDYIKQSGTDLGAKYPFQSTADIFDDIVRWDLRFIIDHWNSSGFDLWEEVNGMHFFTLLVQLSAVDKSLSYFNASERSSPFVEELRQTRRDISKFLVDPANGFINGKYNYIVGTPMIADTLRSGLDISTLLAANTVHDAPSASHLPFDINDPAVLNTLHHLMLHMRSIYPINDSSKNATGIALGRYPEDVYDGYGFGEGNPWVLATCTASTTLYQLIYRHISEQHDLVVPMNNDCSNAFWSELVFSNLTTLGNDEGYLILEFNTPAFNQTIQKIFQLADSFLVKLKAHVGTDGELSEQFNKYTGFMQGAQHLTWSYTSFWDAYQIRQEVLQSL.

A substrate-binding site is contributed by tryptophan 198. Aspartate 261 serves as the catalytic Proton acceptor. Glutamate 264 (proton donor) is an active-site residue.

The protein belongs to the glycosyl hydrolase 15 family.

The enzyme catalyses Hydrolysis of terminal (1-&gt;4)-linked alpha-D-glucose residues successively from non-reducing ends of the chains with release of beta-D-glucose.. This chain is Glucoamylase, intracellular sporulation-specific (SGA1), found in Saccharomyces cerevisiae (strain ATCC 204508 / S288c) (Baker's yeast).